Reading from the N-terminus, the 95-residue chain is N(2)-fixation sustaining protein CowN (95 aa).

This sequence belongs to the CowN family.

Its function is as follows. Is required to sustain N(2)-dependent growth in the presence of low levels of carbon monoxide (CO). Probably acts by protecting the N(2) fixation ability of the nitrogenase complex, which is inactivated in the presence of CO. The polypeptide is N(2)-fixation sustaining protein CowN (Allochromatium vinosum (strain ATCC 17899 / DSM 180 / NBRC 103801 / NCIMB 10441 / D) (Chromatium vinosum)).